The chain runs to 243 residues: NADH-ubiquinone oxidoreductase chain 6 (243 aa).

The next 5 membrane-spanning stretches (helical) occupy residues 16–36, 41–61, 69–89, 104–124, and 201–221; these read ISSV…SVIV, IISV…LILL, AYLI…LMLI, IPLT…LLPY, and IWLF…IVII.

The protein belongs to the complex I subunit 6 family.

Its subcellular location is the mitochondrion membrane. It carries out the reaction a ubiquinone + NADH + 5 H(+)(in) = a ubiquinol + NAD(+) + 4 H(+)(out). Its function is as follows. Core subunit of the mitochondrial membrane respiratory chain NADH dehydrogenase (Complex I) that is believed to belong to the minimal assembly required for catalysis. Complex I functions in the transfer of electrons from NADH to the respiratory chain. The immediate electron acceptor for the enzyme is believed to be ubiquinone. This chain is NADH-ubiquinone oxidoreductase chain 6 (ndh-6), found in Neurospora crassa (strain ATCC 24698 / 74-OR23-1A / CBS 708.71 / DSM 1257 / FGSC 987).